We begin with the raw amino-acid sequence, 468 residues long: Citrate synthase, mitochondrial (468 aa).

Residues Met1–Ser30 constitute a mitochondrion transit peptide. Active-site residues include His303 and His349. Arg358 is an oxaloacetate binding site. The active site involves Asp404. Arg430 and Arg450 together coordinate oxaloacetate.

The protein belongs to the citrate synthase family. As to quaternary structure, homodimer.

The protein resides in the mitochondrion matrix. It carries out the reaction oxaloacetate + acetyl-CoA + H2O = citrate + CoA + H(+). Its pathway is carbohydrate metabolism; tricarboxylic acid cycle; isocitrate from oxaloacetate: step 1/2. Key enzyme of the Krebs tricarboxylic acid cycle which catalyzes the synthesis of citrate from acetyl coenzyme A and oxaloacetate. This is Citrate synthase, mitochondrial (cs) from Danio rerio (Zebrafish).